We begin with the raw amino-acid sequence, 187 residues long: Elongation factor P (187 aa).

Belongs to the elongation factor P family.

It is found in the cytoplasm. It participates in protein biosynthesis; polypeptide chain elongation. Involved in peptide bond synthesis. Stimulates efficient translation and peptide-bond synthesis on native or reconstituted 70S ribosomes in vitro. Probably functions indirectly by altering the affinity of the ribosome for aminoacyl-tRNA, thus increasing their reactivity as acceptors for peptidyl transferase. The polypeptide is Elongation factor P (Thermodesulfovibrio yellowstonii (strain ATCC 51303 / DSM 11347 / YP87)).